The chain runs to 124 residues: MSGRGKGAKAKSKAKSRSSRAGLQFPVGRVHRFLKKGNYGNRVGAGAPVYLAAVLEYLTAEILELAGNAARDNKKSRIIPRHLQLAVRNDEELNKLLGGVTIAQGGVLPNIQTVLLPKKTGKSA.

A compositionally biased stretch (basic residues) spans 1–18 (MSGRGKGAKAKSKAKSRS). The tract at residues 1-21 (MSGRGKGAKAKSKAKSRSSRA) is disordered. An N-acetylserine modification is found at S2. At S2 the chain carries Phosphoserine. Q104 carries the N5-methylglutamine modification. K119 participates in a covalent cross-link: Glycyl lysine isopeptide (Lys-Gly) (interchain with G-Cter in ubiquitin).

The protein belongs to the histone H2A family. In terms of assembly, the nucleosome is a histone octamer containing two molecules each of H2A, H2B, H3 and H4 assembled in one H3-H4 heterotetramer and two H2A-H2B heterodimers. The octamer wraps approximately 147 bp of DNA. Post-translationally, monoubiquitination of Lys-119 gives a specific tag for epigenetic transcriptional repression. Phosphorylation of Ser-2 directly represses transcription.

The protein resides in the nucleus. The protein localises to the chromosome. Core component of nucleosome. Nucleosomes wrap and compact DNA into chromatin, limiting DNA accessibility to the cellular machineries which require DNA as a template. Histones thereby play a central role in transcription regulation, DNA repair, DNA replication and chromosomal stability. DNA accessibility is regulated via a complex set of post-translational modifications of histones, also called histone code, and nucleosome remodeling. This is Late histone H2A.2.1 from Psammechinus miliaris (Green sea urchin).